A 213-amino-acid chain; its full sequence is Outer envelope pore protein 24B, chloroplastic (213 aa).

At 1–3 (MAM) the chain is on the cytoplasmic side. Residues 4–13 (KASIKGKYDT) traverse the membrane as a beta stranded segment. The Chloroplast intermembrane segment spans residues 14–18 (DKTSG). A beta stranded transmembrane segment spans residues 19 to 28 (IGSLAFNAGD). Topologically, residues 29-32 (IKLR) are cytoplasmic. A beta stranded transmembrane segment spans residues 33-42 (ATMTDATLVA). The Chloroplast intermembrane segment spans residues 43–55 (GPTLTGLALAVEK). Residues 56-64 (PGSFIVEYN) traverse the membrane as a beta stranded segment. Residues 65–70 (VPKKDV) are Cytoplasmic-facing. Residues 71–80 (RFQFMNTVRI) form a beta stranded membrane-spanning segment. Residues 81–93 (AEKPLNLTYIHSR) lie on the Chloroplast intermembrane side of the membrane. The chain crosses the membrane as a beta stranded span at residues 94-103 (ADNRTIVDGS). Residues 104-108 (LVIDS) lie on the Cytoplasmic side of the membrane. Residues 109–118 (ANKLSANHMV) form a beta stranded membrane-spanning segment. The Chloroplast intermembrane segment spans residues 119–122 (GTNN). Residues 123-132 (CKIKYTYAHG) form a beta stranded membrane-spanning segment. The Cytoplasmic segment spans residues 133–144 (GLATFEPCYDLA). Residues 145-156 (KNTWDFAVSRRF) traverse the membrane as a beta stranded segment. At 157–159 (YSG) the chain is on the chloroplast intermembrane side. The beta stranded transmembrane segment at 160–168 (DNVRATYQT) threads the bilayer. The Cytoplasmic portion of the chain corresponds to 169–170 (SS). A beta stranded transmembrane segment spans residues 171 to 179 (KLLGMEWSR). Residues 180–201 (NNKASGFKVCASVNLADELKTP) are Chloroplast intermembrane-facing. Residues 202–211 (KLTAETTWNL) form a beta stranded membrane-spanning segment. The Cytoplasmic segment spans residues 212–213 (EM).

It belongs to the plastid outer envelope porin OEP24 (TC 1.B.28) family. As to quaternary structure, homooligomers form large rather nonselective pores in plastidial outer membranes.

It localises to the plastid. Its subcellular location is the etioplast membrane. The protein resides in the chloroplast outer membrane. Its function is as follows. High-conductance voltage-dependent solute channel with a slight selectivity for cations transporting triosephosphates, dicarboxylic acids, ATP, inorganic phosphate (Pi), sugars, and positively or negatively charged amino acids. This chain is Outer envelope pore protein 24B, chloroplastic (OEP24B), found in Arabidopsis thaliana (Mouse-ear cress).